We begin with the raw amino-acid sequence, 61 residues long: Bowman-Birk type proteinase inhibitor B5 (61 aa).

6 disulfide bridges follow: C5-C60, C6-C22, C9-C56, C12-C20, C29-C36, and C33-C48.

It belongs to the Bowman-Birk serine protease inhibitor family. As to expression, expressed in bulb (at protein level).

Its function is as follows. Serine protease inhibitor. Inhibits trypsin (Ki = 41 nM) and weakly inhibits chymotrypsin (Ki = 410 nM). Does not inhibit bacterial subtilisin. In Hyacinthus orientalis (Common hyacinth), this protein is Bowman-Birk type proteinase inhibitor B5.